A 548-amino-acid chain; its full sequence is Stretch-activated cation channel MID1 (548 aa).

The signal sequence occupies residues 1–20; sequence MIVWQALFVVYCLFTTSIHG. Residues 21–341 are Extracellular-facing; sequence LFQDFNPFAN…YLTKKISNGD (321 aa). N-linked (GlcNAc...) asparagine glycosylation is found at Asn32, Asn70, Asn112, Asn125, Asn159, Asn175, Asn228, Asn238, Asn265, Asn282, Asn285, Asn291, and Asn324. A helical membrane pass occupies residues 342–358; the sequence is GLSSVGGILFSHVYFTT. Topologically, residues 359 to 548 are cytoplasmic; it reads RSTDVCSLIF…LMVIHPLDDT (190 aa).

As to quaternary structure, forms an oligomer with a molecular mass of 200 kDa by disulfide bonds. Interacts with CCH1 to form a Ca(2+) influx channel. N-glycosylated.

Its subcellular location is the cell membrane. In terms of biological role, calcium-permeable, cation-selective stretch-activated channel (SAC) that functions together with CCH1 to mediate calcium entry into cells. Required during mating. Together with CCH1, essential for tolerance to iron stress, which leads to an increased oxidative poise, and to cold stress. The chain is Stretch-activated cation channel MID1 (MID1) from Saccharomyces cerevisiae (strain ATCC 204508 / S288c) (Baker's yeast).